The following is a 227-amino-acid chain: Phosphoribosylformylglycinamidine synthase subunit PurQ (227 aa).

The 223-residue stretch at 3-225 (FAVIVLPGSN…VKNWRETHVA (223 aa)) folds into the Glutamine amidotransferase type-1 domain. Catalysis depends on cysteine 86, which acts as the Nucleophile. Residues histidine 194 and glutamate 196 contribute to the active site.

Part of the FGAM synthase complex composed of 1 PurL, 1 PurQ and 2 PurS subunits.

Its subcellular location is the cytoplasm. It catalyses the reaction N(2)-formyl-N(1)-(5-phospho-beta-D-ribosyl)glycinamide + L-glutamine + ATP + H2O = 2-formamido-N(1)-(5-O-phospho-beta-D-ribosyl)acetamidine + L-glutamate + ADP + phosphate + H(+). The enzyme catalyses L-glutamine + H2O = L-glutamate + NH4(+). It participates in purine metabolism; IMP biosynthesis via de novo pathway; 5-amino-1-(5-phospho-D-ribosyl)imidazole from N(2)-formyl-N(1)-(5-phospho-D-ribosyl)glycinamide: step 1/2. Its function is as follows. Part of the phosphoribosylformylglycinamidine synthase complex involved in the purines biosynthetic pathway. Catalyzes the ATP-dependent conversion of formylglycinamide ribonucleotide (FGAR) and glutamine to yield formylglycinamidine ribonucleotide (FGAM) and glutamate. The FGAM synthase complex is composed of three subunits. PurQ produces an ammonia molecule by converting glutamine to glutamate. PurL transfers the ammonia molecule to FGAR to form FGAM in an ATP-dependent manner. PurS interacts with PurQ and PurL and is thought to assist in the transfer of the ammonia molecule from PurQ to PurL. In Bacillus licheniformis (strain ATCC 14580 / DSM 13 / JCM 2505 / CCUG 7422 / NBRC 12200 / NCIMB 9375 / NCTC 10341 / NRRL NRS-1264 / Gibson 46), this protein is Phosphoribosylformylglycinamidine synthase subunit PurQ.